Consider the following 394-residue polypeptide: 1-acylglycerol-3-phosphate O-acyltransferase ICT1 (394 aa).

The AB hydrolase-1 domain maps to 74–381; sequence VLIHGYAASS…AGHNLFLDNP (308 aa). The HXXXXD motif motif lies at 374–379; sequence HNLFLD.

This sequence belongs to the peptidase S33 family. ABHD4/ABHD5 subfamily.

The catalysed reaction is a 1-acyl-sn-glycero-3-phosphate + an acyl-CoA = a 1,2-diacyl-sn-glycero-3-phosphate + CoA. Its function is as follows. Lysophosphatidic acid acyltransferase involved in membrane remodeling leading to increased organic solvent tolerance. Involved in resistance to azoles and copper. This is 1-acylglycerol-3-phosphate O-acyltransferase ICT1 (ICT1) from Saccharomyces cerevisiae (strain ATCC 204508 / S288c) (Baker's yeast).